Reading from the N-terminus, the 116-residue chain is uncharacterized protein (116 aa).

This is an uncharacterized protein from Acidianus filamentous virus 1 (isolate United States/Yellowstone) (AFV-1).